We begin with the raw amino-acid sequence, 134 residues long: Large ribosomal subunit protein bL20 (134 aa).

It belongs to the bacterial ribosomal protein bL20 family.

Binds directly to 23S ribosomal RNA and is necessary for the in vitro assembly process of the 50S ribosomal subunit. It is not involved in the protein synthesizing functions of that subunit. This chain is Large ribosomal subunit protein bL20, found in Rhizobium rhizogenes (strain K84 / ATCC BAA-868) (Agrobacterium radiobacter).